Consider the following 427-residue polypeptide: Probable threonylcarbamoyladenosine tRNA methylthiotransferase (427 aa).

In terms of domain architecture, MTTase N-terminal spans 12-118; that stretch reads MRVYVEGYGC…AGEILKNYVE (107 aa). [4Fe-4S] cluster-binding residues include Cys21, Cys57, Cys86, Cys155, Cys159, and Cys162. Residues 141–370 enclose the Radical SAM core domain; it reads LKPSLITPLP…DKLRRELSYL (230 aa). The TRAM domain maps to 373–427; that stretch reads KKYIGKAMKVLVLDEGKGYTDNFKVVKFEGGEVGEFRKVKITDAKTFGLKGELIL.

This sequence belongs to the methylthiotransferase family. CDKAL1 subfamily. [4Fe-4S] cluster is required as a cofactor.

The catalysed reaction is N(6)-L-threonylcarbamoyladenosine(37) in tRNA + (sulfur carrier)-SH + AH2 + 2 S-adenosyl-L-methionine = 2-methylsulfanyl-N(6)-L-threonylcarbamoyladenosine(37) in tRNA + (sulfur carrier)-H + 5'-deoxyadenosine + L-methionine + A + S-adenosyl-L-homocysteine + 2 H(+). Functionally, catalyzes the methylthiolation of N6-threonylcarbamoyladenosine (t(6)A), leading to the formation of 2-methylthio-N6-threonylcarbamoyladenosine (ms(2)t(6)A) at position 37 in tRNAs that read codons beginning with adenine. The protein is Probable threonylcarbamoyladenosine tRNA methylthiotransferase of Methanocaldococcus jannaschii (strain ATCC 43067 / DSM 2661 / JAL-1 / JCM 10045 / NBRC 100440) (Methanococcus jannaschii).